We begin with the raw amino-acid sequence, 492 residues long: MANYFNTLNLRQQLAQLGKCRFMARDEFADEAGYLKGKKVVIVGCGAQGLNQGLNMRDSGLDVAYALRKEAIAEKRASWRKATENGFKVGTYEELIPQADLVVNLTPDKQHSAVVQAVQPLMKDGAALGYSHGFNIVEVGEQVRKDITVVMVAPKCPGTEVREEYKRGFGVPTLIAVHPENDPKGEGMAIAKAWAAATGGHRAGVLESSFVAEVKSDLMGEQTILCGMLQAGSLLCFDKLVSEGTDAAYAEKLIQFGWETITEALKQGGITLMMDRLSNPAKLRAYALSEQLKEIMAPLFQKHMDDIISGEFSSGMMADWANDDKKLLNWREETGKTAFENAPQFEGKISEQEYFDHGVLMIAMVKAGVELAFETMVDSGIIEESAYYESLHELPLIANTIARKRLYEMNVVISDTAEYGNYLFANAAVPLLKGKFMDSLQAGDLGKSVAGTAVDNAQLRDVNEAIRNHPIEAVGHKLRGYMTDMKRIAVAG.

Residues Ala-15 to Ser-208 enclose the KARI N-terminal Rossmann domain. Residues Cys-45–Gln-48, Arg-68, Arg-76, Ser-78, and Asp-108–Gln-110 contribute to the NADP(+) site. His-132 is an active-site residue. Gly-158 serves as a coordination point for NADP(+). KARI C-terminal knotted domains follow at residues Ser-209–Gln-344 and Phe-345–Met-485. Positions 217, 221, 389, and 393 each coordinate Mg(2+). Residue Ser-414 participates in substrate binding.

The protein belongs to the ketol-acid reductoisomerase family. Mg(2+) serves as cofactor.

The catalysed reaction is (2R)-2,3-dihydroxy-3-methylbutanoate + NADP(+) = (2S)-2-acetolactate + NADPH + H(+). It carries out the reaction (2R,3R)-2,3-dihydroxy-3-methylpentanoate + NADP(+) = (S)-2-ethyl-2-hydroxy-3-oxobutanoate + NADPH + H(+). It functions in the pathway amino-acid biosynthesis; L-isoleucine biosynthesis; L-isoleucine from 2-oxobutanoate: step 2/4. It participates in amino-acid biosynthesis; L-valine biosynthesis; L-valine from pyruvate: step 2/4. Involved in the biosynthesis of branched-chain amino acids (BCAA). Catalyzes an alkyl-migration followed by a ketol-acid reduction of (S)-2-acetolactate (S2AL) to yield (R)-2,3-dihydroxy-isovalerate. In the isomerase reaction, S2AL is rearranged via a Mg-dependent methyl migration to produce 3-hydroxy-3-methyl-2-ketobutyrate (HMKB). In the reductase reaction, this 2-ketoacid undergoes a metal-dependent reduction by NADPH to yield (R)-2,3-dihydroxy-isovalerate. This is Ketol-acid reductoisomerase (NADP(+)) from Yersinia enterocolitica serotype O:8 / biotype 1B (strain NCTC 13174 / 8081).